Consider the following 140-residue polypeptide: 3-hydroxyacyl-[acyl-carrier-protein] dehydratase FabZ (140 aa).

H48 is an active-site residue.

The protein belongs to the thioester dehydratase family. FabZ subfamily.

It is found in the cytoplasm. The enzyme catalyses a (3R)-hydroxyacyl-[ACP] = a (2E)-enoyl-[ACP] + H2O. In terms of biological role, involved in unsaturated fatty acids biosynthesis. Catalyzes the dehydration of short chain beta-hydroxyacyl-ACPs and long chain saturated and unsaturated beta-hydroxyacyl-ACPs. The protein is 3-hydroxyacyl-[acyl-carrier-protein] dehydratase FabZ of Caldicellulosiruptor bescii (strain ATCC BAA-1888 / DSM 6725 / KCTC 15123 / Z-1320) (Anaerocellum thermophilum).